The sequence spans 366 residues: Histidinol-phosphate aminotransferase 2 (366 aa).

A compositionally biased stretch (polar residues) spans 1-11; it reads MQVKDQLSSLQ. The interval 1-21 is disordered; sequence MQVKDQLSSLQPYKPGKSPEQ. Lys-222 carries the N6-(pyridoxal phosphate)lysine modification.

The protein belongs to the class-II pyridoxal-phosphate-dependent aminotransferase family. Histidinol-phosphate aminotransferase subfamily. Homodimer. Requires pyridoxal 5'-phosphate as cofactor.

The enzyme catalyses L-histidinol phosphate + 2-oxoglutarate = 3-(imidazol-4-yl)-2-oxopropyl phosphate + L-glutamate. The protein operates within amino-acid biosynthesis; L-histidine biosynthesis; L-histidine from 5-phospho-alpha-D-ribose 1-diphosphate: step 7/9. The sequence is that of Histidinol-phosphate aminotransferase 2 (hisC2) from Bacillus cereus (strain ATCC 14579 / DSM 31 / CCUG 7414 / JCM 2152 / NBRC 15305 / NCIMB 9373 / NCTC 2599 / NRRL B-3711).